Consider the following 79-residue polypeptide: Protein B6 (79 aa).

In Human herpesvirus 6B (strain Z29) (HHV-6 variant B), this protein is Protein B6 (B6).